A 438-amino-acid polypeptide reads, in one-letter code: Serine hydroxymethyltransferase 1 (438 aa).

Residues leucine 130 and glycine 134–leucine 136 contribute to the (6S)-5,6,7,8-tetrahydrofolate site. Lysine 239 carries the post-translational modification N6-(pyridoxal phosphate)lysine.

The protein belongs to the SHMT family. As to quaternary structure, homodimer. The cofactor is pyridoxal 5'-phosphate.

The protein localises to the cytoplasm. The catalysed reaction is (6R)-5,10-methylene-5,6,7,8-tetrahydrofolate + glycine + H2O = (6S)-5,6,7,8-tetrahydrofolate + L-serine. It participates in one-carbon metabolism; tetrahydrofolate interconversion. The protein operates within amino-acid biosynthesis; glycine biosynthesis; glycine from L-serine: step 1/1. Its function is as follows. Catalyzes the reversible interconversion of serine and glycine with tetrahydrofolate (THF) serving as the one-carbon carrier. This reaction serves as the major source of one-carbon groups required for the biosynthesis of purines, thymidylate, methionine, and other important biomolecules. Also exhibits THF-independent aldolase activity toward beta-hydroxyamino acids, producing glycine and aldehydes, via a retro-aldol mechanism. This chain is Serine hydroxymethyltransferase 1, found in Mycobacterium tuberculosis (strain CDC 1551 / Oshkosh).